The sequence spans 131 residues: Profilin-7 (131 aa).

C13 and C115 are disulfide-bonded. The Involved in PIP2 interaction motif lies at 81-97; that stretch reads AVIRGKKGSGGITVKKT. Residue T111 is modified to Phosphothreonine.

The protein belongs to the profilin family. In terms of assembly, occurs in many kinds of cells as a complex with monomeric actin in a 1:1 ratio. Post-translationally, phosphorylated by MAP kinases.

Its subcellular location is the cytoplasm. The protein localises to the cytoskeleton. Functionally, binds to actin and affects the structure of the cytoskeleton. At high concentrations, profilin prevents the polymerization of actin, whereas it enhances it at low concentrations. This Zea mays (Maize) protein is Profilin-7.